Here is a 662-residue protein sequence, read N- to C-terminus: Sodium/glucose cotransporter 1 (662 aa).

The Extracellular segment spans residues 1-24 (MDSSTLSPLTTSTAAPLESYERIR). Residues 25-47 (NAADISVIVIYFLVVMAVGLWAM) form a helical membrane-spanning segment. Residues 48–66 (FSTNRGTVGGFFLAGRSMV) lie on the Cytoplasmic side of the membrane. A helical transmembrane segment spans residues 67-90 (WWPIGASLFASNIGSGHFVGLAGT). The Extracellular portion of the chain corresponds to 91 to 95 (GAASG). A helical membrane pass occupies residues 96–117 (IATGGFEWNALIMVVVLGWVFV). Residues 118 to 139 (PIYIRAGVVTMPEYLQKRFGGK) are Cytoplasmic-facing. A helical membrane pass occupies residues 140 to 169 (RIQIYLSILSLLLYIFTKISADIFSGAIFI). Residues 170 to 176 (QLTLGLD) lie on the Extracellular side of the membrane. Residues 177–193 (IYVAIIILLVITGLYTI) form a helical membrane-spanning segment. The Cytoplasmic portion of the chain corresponds to 194–202 (TGGLAAVIY). A helical transmembrane segment spans residues 203-221 (TDTLQTAIMMVGSVILTGF). The Extracellular segment spans residues 222–275 (AFHEVGGYEAFTEKYMRAIPSQISYGNTSIPQKCYTPREDAFHIFRDAITGDIP). The N-linked (GlcNAc...) asparagine glycan is linked to Asn248. 5 cysteine pairs are disulfide-bonded: Cys255-Cys511, Cys255-Cys608, Cys345-Cys351, Cys355-Cys361, and Cys517-Cys522. Residues 276–295 (WPGLVFGMSILTLWYWCTDQ) traverse the membrane as a helical segment. Residues 296 to 309 (VIVQRCLSAKNLSH) lie on the Cytoplasmic side of the membrane. A helical transmembrane segment spans residues 310–331 (VKAGCILCGYLKVMPMFLIVMM). The Extracellular portion of the chain corresponds to 332–375 (GMVSRILYTDKVACVVPSECERYCGTRVGCTNIAFPTLVVELMP). A helical membrane pass occupies residues 376-406 (NGLRGLMLSVMMASLMSSLTSIFNSASTLFT). Residues 407–422 (MDIYTKIRKKASEKEL) are Cytoplasmic-facing. The helical transmembrane segment at 423–444 (MIAGRLFMLFLIGISIAWVPIV) threads the bilayer. Over 445–451 (QSAQSGQ) the chain is Extracellular. The helical transmembrane segment at 452–477 (LFDYIQSITSYLGPPIAAVFLLAIFW) threads the bilayer. Position 457 (Gln457) interacts with D-glucose. The Cytoplasmic portion of the chain corresponds to 478-481 (KRVN). Residues 482-504 (EPGAFWGLVLGFLIGISRMITEF) form a helical membrane-spanning segment. The Extracellular portion of the chain corresponds to 505-525 (AYGTGSCMEPSNCPTIICGVH). A helical transmembrane segment spans residues 526 to 547 (YLYFAIILFVISIITVVVVSLF). The Cytoplasmic segment spans residues 548-642 (TKPIPDVHLY…TSEHPLWRTV (95 aa)). Residues 643–660 (VNINGVILLAVAVFCYAY) traverse the membrane as a helical segment. Residues 661-662 (FA) are Extracellular-facing.

The protein belongs to the sodium:solute symporter (SSF) (TC 2.A.21) family. Post-translationally, N-glycosylation is not necessary for the cotransporter function. Found predominantly in intestine, renal cortex and in outer renal medulla.

The protein localises to the apical cell membrane. It catalyses the reaction D-glucose(out) + 2 Na(+)(out) = D-glucose(in) + 2 Na(+)(in). The catalysed reaction is D-galactose(out) + 2 Na(+)(out) = D-galactose(in) + 2 Na(+)(in). With respect to regulation, enhanced by the interaction with PDZK1IP1/MAP17; but unlike SLC5A2/SGLT2, PDZK1IP1 is not essential for SLC5A1 transporter activity. Possibly modulated by cholesterol binding. In terms of biological role, electrogenic Na(+)-coupled sugar symporter that actively transports D-glucose or D-galactose at the plasma membrane, with a Na(+) to sugar coupling ratio of 2:1. Transporter activity is driven by a transmembrane Na(+) electrochemical gradient set by the Na(+)/K(+) pump. Has a primary role in the transport of dietary monosaccharides from enterocytes to blood. Responsible for the absorption of D-glucose or D-galactose across the apical brush-border membrane of enterocytes, whereas basolateral exit is provided by GLUT2. Additionally, functions as a D-glucose sensor in enteroendocrine cells, triggering the secretion of the incretins GCG and GIP that control food intake and energy homeostasis. Together with SGLT2, functions in reabsorption of D-glucose from glomerular filtrate, playing a nonredundant role in the S3 segment of the proximal tubules. Transports D-glucose into endometrial epithelial cells, controlling glycogen synthesis and nutritional support for the embryo as well as the decidual transformation of endometrium prior to conception. Acts as a water channel enabling passive water transport in response to the osmotic gradient created upon sugar and Na(+) uptake. Has high water conductivity comparable to aquaporins and therefore is expected to play an important role in transepithelial water permeability, especially in the small intestine. The polypeptide is Sodium/glucose cotransporter 1 (SLC5A1) (Oryctolagus cuniculus (Rabbit)).